The primary structure comprises 432 residues: Protein RETICULATA, chloroplastic (432 aa).

A chloroplast-targeting transit peptide spans 1-47 (MAGCAMNLQFSSVVKVRNEISSFGICNRDFVFRDLAKAMKVPVLRIR). The interval 109–140 (GNVGDGFNGSDGNGGGGGGGNGGEGDGEGEDY) is disordered. Gly residues predominate over residues 111–132 (VGDGFNGSDGNGGGGGGGNGGE). 2 helical membrane passes run 249–269 (LYVA…GMLA) and 322–342 (IMYG…ANLI).

The protein belongs to the RETICULATA family. As to expression, highly expressed in the vasculature of developing leaf primordia, margins of fully expanded leaves, hydathodes of rosette of cauline leaves, basal region of the lamina, stipules, root tips, stamens and in the abscission zone of the funiculus.

It localises to the plastid. The protein localises to the chloroplast membrane. Its function is as follows. May play a role in leaf development. Required for leaf mesophyll cell division in the early stages of leaf organogenesis. Acts in a developmental pathway that involves PPT1/CUE1 but does not include ASE2/DOV1. The protein is Protein RETICULATA, chloroplastic of Arabidopsis thaliana (Mouse-ear cress).